The following is a 122-amino-acid chain: NLFQFGDMILQKTGKEAVHSYAIYGCYCGWGGQGRAQDATDRCCFAQDCCYGRVNDCNPKTATYTYSFENGDIVCGDNDLCLRAVCECDRAAAICLGENVNTYDKNYEYYSISHCTEESEQC.

Intrachain disulfides connect Cys26-Cys115, Cys28-Cys44, Cys43-Cys95, Cys49-Cys122, Cys50-Cys88, Cys57-Cys81, and Cys75-Cys86.

The protein belongs to the phospholipase A2 family. Group II subfamily. D49 sub-subfamily. In terms of assembly, heterodimer of A and B (AC P14420) chains; non-covalently linked. The A chain (acidic) is non-toxic, and increases the toxicity of the B chain (basic). The A chain may act as factor stabilizing the complex structure and hence retaining its toxicity by preventing non-specific binding. Upon binding to the target membranes the A chain may dissociate. As to expression, expressed by the venom gland.

The protein resides in the secreted. Heterodimer: postsynaptic neurotoxin. Its function is as follows. Monomer: Acidic phospholipase A2 homolog that is non-toxic. The protein is Acidic phospholipase A2 homolog vipoxin A chain of Vipera ammodytes meridionalis (Eastern sand viper).